The chain runs to 246 residues: 3'(2'),5'-bisphosphate nucleotidase CysQ (246 aa).

Residues Glu-64, Asp-83, Leu-85, Asp-86, and Asp-205 each coordinate Mg(2+). Substrate is bound at residue Glu-64. Substrate is bound by residues 85-88 (LDGT) and Asp-205.

This sequence belongs to the inositol monophosphatase superfamily. CysQ family. The cofactor is Mg(2+).

The protein localises to the cell inner membrane. The catalysed reaction is adenosine 3',5'-bisphosphate + H2O = AMP + phosphate. Converts adenosine-3',5'-bisphosphate (PAP) to AMP. The protein is 3'(2'),5'-bisphosphate nucleotidase CysQ of Escherichia coli O6:H1 (strain CFT073 / ATCC 700928 / UPEC).